The primary structure comprises 624 residues: Protein POLLEN DEFECTIVE IN GUIDANCE 1 (624 aa).

The disordered stretch occupies residues 20 to 63 (SFENDDTSIRRSSSDPITGNVASESPRDYGKRKRSKKKKKKVNQ). A compositionally biased stretch (polar residues) spans 33–42 (SDPITGNVAS). Positions 49–61 (GKRKRSKKKKKKV) are enriched in basic residues. Helical transmembrane passes span 263–283 (VLIDTGFFVCVNSFLSLLTVM), 305–325 (ASELSDLACFLVLATGTILLG), 391–411 (FVSDLALTMAASILHSFILLA), 413–433 (AITLSTCIVAHNNALLALLVS), 545–565 (LTFVPLAPACVVIRVLTPVYA), and 578–598 (LWMVILFVITYIMLTSLKVLI).

Belongs to the TAPT1 family. Interacts with CRT3, but not with CRT1 or CNX. In terms of tissue distribution, expressed in inflorescences, siliques, roots and shoots. Expressed in early embryo, endosperm, mature pollen and pollen tubes, synergide cells and weakly in antipodal cells.

It localises to the membrane. The protein resides in the endoplasmic reticulum lumen. Functionally, probable component of the calreticulin 3 (CRT3) complex, acting probably as a co-chaperone involved in protein retention in the endoplasmic reticulum lumen. Required for micropylar pollen tube guidance. Plays an essential role in cell plate orientation or positioning in early embryo patterning. The sequence is that of Protein POLLEN DEFECTIVE IN GUIDANCE 1 (POD1) from Arabidopsis thaliana (Mouse-ear cress).